The chain runs to 577 residues: Adenine deaminase (577 aa).

The protein belongs to the metallo-dependent hydrolases superfamily. Adenine deaminase family. Requires Mn(2+) as cofactor.

It carries out the reaction adenine + H2O + H(+) = hypoxanthine + NH4(+). The polypeptide is Adenine deaminase (adeC) (Bacillus subtilis (strain 168)).